The primary structure comprises 913 residues: Alanine--tRNA ligase (913 aa).

Zn(2+) contacts are provided by His600, His604, Cys703, and His707.

Belongs to the class-II aminoacyl-tRNA synthetase family. It depends on Zn(2+) as a cofactor.

The protein resides in the cytoplasm. The enzyme catalyses tRNA(Ala) + L-alanine + ATP = L-alanyl-tRNA(Ala) + AMP + diphosphate. In terms of biological role, catalyzes the attachment of alanine to tRNA(Ala) in a two-step reaction: alanine is first activated by ATP to form Ala-AMP and then transferred to the acceptor end of tRNA(Ala). Also edits incorrectly charged Ser-tRNA(Ala) and Gly-tRNA(Ala) via its editing domain. This is Alanine--tRNA ligase from Methanothrix thermoacetophila (strain DSM 6194 / JCM 14653 / NBRC 101360 / PT) (Methanosaeta thermophila).